Here is a 561-residue protein sequence, read N- to C-terminus: FAD-binding monooxygenase tazF (561 aa).

FAD contacts are provided by residues 74–77, 86–87, and Tyr92; these read TWLD and DI. 84–86 serves as a coordination point for NADP(+); that stretch reads GCD. NADP(+) contacts are provided by residues 212–218 and 235–236; these read NGSSALQ and RH.

It belongs to the FAD-binding monooxygenase family. It depends on FAD as a cofactor.

The protein operates within secondary metabolite biosynthesis. In terms of biological role, FAD-binding monooxygenase; part of the gene cluster that mediates the biosynthesis of azaterrilone A and other azaphilones, a class of fungal metabolites characterized by a highly oxygenated pyrano-quinone bicyclic core and exhibiting a broad range of bioactivities. The first step of the pathway begins with the non-reducing polyketide synthase tazA that assembles one acetyl-CoA starter unit, five malonyl-CoA units, and catalyzes a series of Claisen condensations, methylation, PT-mediated cyclization, and finally releases the first hexaketide precursor through the R-domain. The tazA product then undergoes reduction on its terminal ketone and the following pyran-ring formation by yet undetermined enzyme(s). Dehydration and enoyl reduction, possibly involving the trans-enoyl reductase tazE leads to the next intermediate. TazD is predicted as an acetyltransferase and might catalyze the acetylation steps leading to the synthesis of azaterrilone A. Azaterrilone A is not the final product of the taz pathway and both the highly reducing polyketide synthase tazB and the dual enzyme tazHJ catalyze late steps of the pathway, leading to the production of the 2 final stereoisomers that contain additional polyketide modification whose structures have still to be determined. In Aspergillus terreus (strain NIH 2624 / FGSC A1156), this protein is FAD-binding monooxygenase tazF.